The primary structure comprises 70 residues: Prokaryotic ubiquitin-like protein UBact (70 aa).

Basic and acidic residues-rich tracts occupy residues 1 to 15 (MPDQRQQERSRRKQG) and 24 to 50 (TRHDPPPSEQESPVRRMLRDLRERDPG). The tract at residues 1–70 (MPDQRQQERS…RQQRREQSGE (70 aa)) is disordered. Residue Glu70 forms an Isoglutamyl lysine isopeptide (Glu-Lys) (interchain with K-? in acceptor proteins) linkage.

This sequence belongs to the ubiquitin-like protein UBact family.

In terms of biological role, may function as a protein modifier covalently attached to lysine residues of substrate proteins. This may serve to target the modified proteins for degradation by proteasomes. This chain is Prokaryotic ubiquitin-like protein UBact, found in Terrybacteria sp. (strain RIFCSPHIGHO2_01_FULL_58_15).